The chain runs to 262 residues: Octanoyltransferase (262 aa).

The region spanning 41–232 (PQLPDGLLLL…SFCQVFGLQA (192 aa)) is the BPL/LPL catalytic domain. Substrate-binding positions include 96-103 (RGGEVTYH), 163-165 (AIG), and 176-178 (GFA). Catalysis depends on cysteine 194, which acts as the Acyl-thioester intermediate.

Belongs to the LipB family.

It is found in the cytoplasm. It carries out the reaction octanoyl-[ACP] + L-lysyl-[protein] = N(6)-octanoyl-L-lysyl-[protein] + holo-[ACP] + H(+). It participates in protein modification; protein lipoylation via endogenous pathway; protein N(6)-(lipoyl)lysine from octanoyl-[acyl-carrier-protein]: step 1/2. In terms of biological role, catalyzes the transfer of endogenously produced octanoic acid from octanoyl-acyl-carrier-protein onto the lipoyl domains of lipoate-dependent enzymes. Lipoyl-ACP can also act as a substrate although octanoyl-ACP is likely to be the physiological substrate. This chain is Octanoyltransferase, found in Synechococcus sp. (strain JA-2-3B'a(2-13)) (Cyanobacteria bacterium Yellowstone B-Prime).